The following is a 772-amino-acid chain: Alpha-xylosidase (772 aa).

D416 functions as the Nucleophile in the catalytic mechanism. E419 is a catalytic residue. D482 functions as the Proton donor in the catalytic mechanism.

Belongs to the glycosyl hydrolase 31 family. In terms of assembly, homohexamer.

It carries out the reaction Hydrolysis of terminal, non-reducing alpha-D-xylose residues with release of alpha-D-xylose.. In terms of biological role, can catalyze the transfer of alpha-xylosyl residue from alpha-xyloside to xylose, glucose, mannose, fructose, maltose, isomaltose, nigerose, kojibiose, sucrose and trehalose. This is Alpha-xylosidase (yicI) from Escherichia coli (strain K12).